Consider the following 152-residue polypeptide: Nucleoside diphosphate kinase A (152 aa).

The ATP site is built by lysine 12, phenylalanine 60, arginine 88, and threonine 94. Lysine 100 is covalently cross-linked (Glycyl lysine isopeptide (Lys-Gly) (interchain with G-Cter in ubiquitin)). The ATP site is built by arginine 105 and asparagine 115. Histidine 118 (pros-phosphohistidine intermediate) is an active-site residue. Phosphoserine is present on residues serine 120 and serine 122. The residue at position 124 (lysine 124) is an N6-acetyllysine. Serine 125 is subject to Phosphoserine.

Belongs to the NDK family. In terms of assembly, hexamer of two different chains: An and B (A6, A5B, A4B2, A3B3, A2B4, AB5, B6). Interacts with PRUNE1. Component of the SET complex, composed of at least ANP32A, APEX1, HMGB2, NME1, SET and TREX1. Within this complex, interacts directly with SET. Also interacts with TREX1, but only following translocation to the nucleus. The cofactor is Mg(2+).

The protein localises to the cytoplasm. It localises to the nucleus. It carries out the reaction a 2'-deoxyribonucleoside 5'-diphosphate + ATP = a 2'-deoxyribonucleoside 5'-triphosphate + ADP. The enzyme catalyses a ribonucleoside 5'-diphosphate + ATP = a ribonucleoside 5'-triphosphate + ADP. With respect to regulation, autophosphorylation at His-118 increases serine/threonine protein kinase activity of the enzyme. Interaction with the SET complex inhibits exonuclease activity. Major role in the synthesis of nucleoside triphosphates other than ATP. The ATP gamma phosphate is transferred to the NDP beta phosphate via a ping-pong mechanism, using a phosphorylated active-site intermediate. Possesses nucleoside-diphosphate kinase, serine/threonine-specific protein kinase, geranyl and farnesyl pyrophosphate kinase, histidine protein kinase and 3'-5' exonuclease activities. Involved in cell proliferation, differentiation and development, signal transduction, G protein-coupled receptor endocytosis, and gene expression. Required for neural development including neural patterning and cell fate determination. During GZMA-mediated cell death, works in concert with TREX1. NME1 nicks one strand of DNA and TREX1 removes bases from the free 3' end to enhance DNA damage and prevent DNA end reannealing and rapid repair. The chain is Nucleoside diphosphate kinase A (Nme1) from Mus musculus (Mouse).